The sequence spans 823 residues: Leucine--tRNA ligase (823 aa).

The short motif at 42–52 (PYPSGTLHMGH) is the 'HIGH' region element. The short motif at 575–579 (KMSKS) is the 'KMSKS' region element. K578 lines the ATP pocket.

It belongs to the class-I aminoacyl-tRNA synthetase family.

The protein resides in the cytoplasm. It carries out the reaction tRNA(Leu) + L-leucine + ATP = L-leucyl-tRNA(Leu) + AMP + diphosphate. This Legionella pneumophila (strain Paris) protein is Leucine--tRNA ligase.